A 352-amino-acid chain; its full sequence is Eukaryotic translation initiation factor 3 subunit H (352 aa).

A disordered region spans residues 1-34; sequence MASRKEGTGSTATSSSSTGGAVGKGKGKGGSGDS. Ser-3 bears the Phosphoserine mark. Positions 8–19 are enriched in low complexity; the sequence is TGSTATSSSSTG. The span at 20 to 32 shows a compositional bias: gly residues; it reads GAVGKGKGKGGSG. The MPN domain maps to 39 to 173; the sequence is VQIDGLVVLK…LKAYRLTPKL (135 aa). A Phosphoserine modification is found at Ser-183. The tract at residues 265–300 is disordered; sequence RNSSKQQQQKHQYQQRRQQENMQRQSRGEPPLPEED. Residues 270–289 are compositionally biased toward low complexity; sequence QQQQKHQYQQRRQQENMQRQ. Lys-303 is covalently cross-linked (Glycyl lysine isopeptide (Lys-Gly) (interchain with G-Cter in SUMO2)).

This sequence belongs to the eIF-3 subunit H family. Component of the eukaryotic translation initiation factor 3 (eIF-3) complex, which is composed of 13 subunits: EIF3A, EIF3B, EIF3C, EIF3D, EIF3E, EIF3F, EIF3G, EIF3H, EIF3I, EIF3J, EIF3K, EIF3L and EIF3M. The eIF-3 complex appears to include 3 stable modules: module A is composed of EIF3A, EIF3B, EIF3G and EIF3I; module B is composed of EIF3F, EIF3H, and EIF3M; and module C is composed of EIF3C, EIF3D, EIF3E, EIF3K and EIF3L. EIF3C of module C binds EIF3B of module A and EIF3H of module B, thereby linking the three modules. EIF3J is a labile subunit that binds to the eIF-3 complex via EIF3B. The eIF-3 complex interacts with RPS6KB1 under conditions of nutrient depletion. Mitogenic stimulation leads to binding and activation of a complex composed of MTOR and RPTOR, leading to phosphorylation and release of RPS6KB1 and binding of EIF4B to eIF-3. Interacts with RNF139; the interaction leads to protein translation inhibitions in a ubiquitination-dependent manner. Interacts with DHX33; the interaction is independent of RNA.

Its subcellular location is the cytoplasm. In terms of biological role, component of the eukaryotic translation initiation factor 3 (eIF-3) complex, which is required for several steps in the initiation of protein synthesis. The eIF-3 complex associates with the 40S ribosome and facilitates the recruitment of eIF-1, eIF-1A, eIF-2:GTP:methionyl-tRNAi and eIF-5 to form the 43S pre-initiation complex (43S PIC). The eIF-3 complex stimulates mRNA recruitment to the 43S PIC and scanning of the mRNA for AUG recognition. The eIF-3 complex is also required for disassembly and recycling of post-termination ribosomal complexes and subsequently prevents premature joining of the 40S and 60S ribosomal subunits prior to initiation. The eIF-3 complex specifically targets and initiates translation of a subset of mRNAs involved in cell proliferation, including cell cycling, differentiation and apoptosis, and uses different modes of RNA stem-loop binding to exert either translational activation or repression. This chain is Eukaryotic translation initiation factor 3 subunit H (Eif3h), found in Rattus norvegicus (Rat).